The following is a 237-amino-acid chain: Large ribosomal subunit protein uL1 (237 aa).

It belongs to the universal ribosomal protein uL1 family. In terms of assembly, part of the 50S ribosomal subunit.

Its function is as follows. Binds directly to 23S rRNA. The L1 stalk is quite mobile in the ribosome, and is involved in E site tRNA release. Protein L1 is also a translational repressor protein, it controls the translation of the L11 operon by binding to its mRNA. The chain is Large ribosomal subunit protein uL1 from Thermosynechococcus vestitus (strain NIES-2133 / IAM M-273 / BP-1).